Consider the following 62-residue polypeptide: Photosystem II reaction center protein Z (62 aa).

The next 2 helical transmembrane spans lie at 8-28 (SVFALVAISFLLVVGVPVVLA) and 41-61 (FSGASLWIALVFLVGVLNSFI).

It belongs to the PsbZ family. PSII is composed of 1 copy each of membrane proteins PsbA, PsbB, PsbC, PsbD, PsbE, PsbF, PsbH, PsbI, PsbJ, PsbK, PsbL, PsbM, PsbT, PsbY, PsbZ, Psb30/Ycf12, at least 3 peripheral proteins of the oxygen-evolving complex and a large number of cofactors. It forms dimeric complexes.

Its subcellular location is the plastid. The protein localises to the chloroplast thylakoid membrane. May control the interaction of photosystem II (PSII) cores with the light-harvesting antenna, regulates electron flow through the 2 photosystem reaction centers. PSII is a light-driven water plastoquinone oxidoreductase, using light energy to abstract electrons from H(2)O, generating a proton gradient subsequently used for ATP formation. This chain is Photosystem II reaction center protein Z, found in Chaetosphaeridium globosum (Charophycean green alga).